A 136-amino-acid chain; its full sequence is Acidic phospholipase A2 EC-I (136 aa).

The signal sequence occupies residues 1-16; that stretch reads MKTLWIVAVWLIAVEG. Cystine bridges form between Cys-42/Cys-129, Cys-44/Cys-60, Cys-59/Cys-111, Cys-65/Cys-136, Cys-66/Cys-104, Cys-73/Cys-97, and Cys-91/Cys-102. 3 residues coordinate Ca(2+): Tyr-43, Gly-45, and Gly-47. His-63 is an active-site residue. Asp-64 contacts Ca(2+). Asp-105 is an active-site residue. A may be responsible for inhibition of the platelet-aggregation activity region spans residues 112-133; that stretch reads LGENVNTYDKKYKSYEDCTEEV.

Belongs to the phospholipase A2 family. Group II subfamily. D49 sub-subfamily. As to quaternary structure, monomer. Requires Ca(2+) as cofactor. As to expression, expressed by the venom gland.

Its subcellular location is the secreted. The enzyme catalyses a 1,2-diacyl-sn-glycero-3-phosphocholine + H2O = a 1-acyl-sn-glycero-3-phosphocholine + a fatty acid + H(+). Its function is as follows. Snake venom phospholipase A2 (PLA2) that inhibits human platelet aggregation induced by ADP, collagen and epinephrin (possibly by binding the platelet receptor alpha-IIb/beta-III) and induces mild edema in the foot pads of mice. PLA2 catalyzes the calcium-dependent hydrolysis of the 2-acyl groups in 3-sn-phosphoglycerides. The protein is Acidic phospholipase A2 EC-I of Echis carinatus (Saw-scaled viper).